Consider the following 225-residue polypeptide: Putative N-acetylmannosamine-6-phosphate 2-epimerase (225 aa).

This sequence belongs to the NanE family.

It catalyses the reaction an N-acyl-D-glucosamine 6-phosphate = an N-acyl-D-mannosamine 6-phosphate. The protein operates within amino-sugar metabolism; N-acetylneuraminate degradation; D-fructose 6-phosphate from N-acetylneuraminate: step 3/5. Its function is as follows. Converts N-acetylmannosamine-6-phosphate (ManNAc-6-P) to N-acetylglucosamine-6-phosphate (GlcNAc-6-P). This chain is Putative N-acetylmannosamine-6-phosphate 2-epimerase, found in Vibrio vulnificus (strain CMCP6).